Reading from the N-terminus, the 254-residue chain is Probable WRKY transcription factor 67 (254 aa).

Positions 102 to 170 (SRTMCPNDGF…YLGKHVCKAF (69 aa)) form a DNA-binding region, WRKY.

The protein belongs to the WRKY group III family.

It localises to the nucleus. Transcription factor. Interacts specifically with the W box (5'-(T)TGAC[CT]-3'), a frequently occurring elicitor-responsive cis-acting element. This is Probable WRKY transcription factor 67 (WRKY67) from Arabidopsis thaliana (Mouse-ear cress).